Consider the following 285-residue polypeptide: 3-methyl-2-oxobutanoate hydroxymethyltransferase (285 aa).

Positions 1–23 (MSEHNVYGAAQPAQPAQPAQPRT) are disordered. Over residues 9–21 (AAQPAQPAQPAQP) the composition is skewed to low complexity. Aspartate 66 and aspartate 105 together coordinate Mg(2+). 3-methyl-2-oxobutanoate is bound by residues 66–67 (DS), aspartate 105, and lysine 135. Glutamate 137 contributes to the Mg(2+) binding site. The active-site Proton acceptor is glutamate 203.

This sequence belongs to the PanB family. As to quaternary structure, homodecamer; pentamer of dimers. The cofactor is Mg(2+).

The protein localises to the cytoplasm. The enzyme catalyses 3-methyl-2-oxobutanoate + (6R)-5,10-methylene-5,6,7,8-tetrahydrofolate + H2O = 2-dehydropantoate + (6S)-5,6,7,8-tetrahydrofolate. Its pathway is cofactor biosynthesis; (R)-pantothenate biosynthesis; (R)-pantoate from 3-methyl-2-oxobutanoate: step 1/2. Functionally, catalyzes the reversible reaction in which hydroxymethyl group from 5,10-methylenetetrahydrofolate is transferred onto alpha-ketoisovalerate to form ketopantoate. This chain is 3-methyl-2-oxobutanoate hydroxymethyltransferase, found in Mycobacterium avium (strain 104).